A 307-amino-acid polypeptide reads, in one-letter code: Protein FAM76A (307 aa).

Disordered regions lie at residues 142–195 (QRKH…ESIT) and 287–307 (KQAA…ITSP). Residues 161-182 (SRLSGGSHYNSQKTLSTSSIQN) are compositionally biased toward polar residues. Positions 217–299 (IIAQLKEEVA…AALSKSKKSE (83 aa)) form a coiled coil.

This sequence belongs to the FAM76 family.

This chain is Protein FAM76A (FAM76A), found in Bos taurus (Bovine).